We begin with the raw amino-acid sequence, 167 residues long: Periplasmic nitrate reductase, electron transfer subunit (167 aa).

An N-terminal signal peptide occupies residues 1-34; it reads MRRAHRAGERVMMKRFGIALLAVAIAAGASSLTA. The tract at residues 40 to 65 is disordered; that stretch reads GLHGPAPLNDEGPAPPMLPNRNTSER. Positions 79, 93, 96, 97, 114, 133, 136, and 137 each coordinate heme c.

This sequence belongs to the NapB family. In terms of assembly, component of the periplasmic nitrate reductase NapAB complex composed of NapA and NapB. In terms of processing, binds 2 heme C groups per subunit.

It localises to the periplasm. In terms of biological role, electron transfer subunit of the periplasmic nitrate reductase complex NapAB. Receives electrons from the membrane-anchored tetraheme c-type NapC protein and transfers these to NapA subunit, thus allowing electron flow between membrane and periplasm. Essential for periplasmic nitrate reduction with nitrate as the terminal electron acceptor. This chain is Periplasmic nitrate reductase, electron transfer subunit, found in Bradyrhizobium japonicum.